The chain runs to 201 residues: MTDAPDHHATEKRLITETGVAARVAQIVEPSLEGLGFRLVRVRVTGQNGCTVQIMAERPDGTMTVEDCEAVSRTISPLLDVDDPIGRAYHLEISSPGIDRPLVRAGDFARWAGHEAKVELAVPLEGRKRFRGLIRAPEGATVRIDLPDAKEGTPASYELRLADIGEAHLVLTDDLIRESLRRGSAPAQDEEGEDEAPGAPL.

Positions 180 to 201 are disordered; the sequence is LRRGSAPAQDEEGEDEAPGAPL. Over residues 188–201 the composition is skewed to acidic residues; sequence QDEEGEDEAPGAPL.

This sequence belongs to the RimP family.

It is found in the cytoplasm. In terms of biological role, required for maturation of 30S ribosomal subunits. The polypeptide is Ribosome maturation factor RimP (Methylobacterium sp. (strain 4-46)).